The primary structure comprises 431 residues: MRPEESWSRVGLVQCEEADSALEEPINVEEEDGGLQICRVCGDKANGYHFNVMTCEGCKGFFRRAMKRNVRLRCPFRKGTCEITRKTRRQCQACRLRKCLESGMKKEMIMSDAAVEQRRALIKRKKREKIEAPPPGGQGLTEEQQALIQELMDAQMQTFDTTFSHFKDFRLPAVFHSGCELPEFLQASLLEDPATWSQIMKDRVPMKISLQLRGEDGSIWNYQPPSKSDGKEIIPLLPHLADVSTYMFKGVINFAKVISYFRDLPIEDQISLLKGATFEMCILRFNTMFDTETGTWECGRLAYCFEDPNGGFQKLLLDPLMKFHCMLKKLQLHKEEYVLMQAISLFSPDRPGVVQRSVVDQLQERFALTLKAYIECSRPYPAHRFLFLKIMAVLTELRSINAQQTQQLLRIQDSHPFATPLMQELFSSTDG.

Residues 35-104 (LQICRVCGDK…RLRKCLESGM (70 aa)) constitute a DNA-binding region (nuclear receptor). 2 NR C4-type zinc fingers span residues 38-58 (CRVCGDKANGYHFNVMTCEGC) and 74-99 (CPFRKGTCEITRKTRRQCQACRLRKC). The Bipartite nuclear localization signal signature appears at 63-89 (RRAMKRNVRLRCPFRKGTCEITRKTRR). The interval 105–142 (KKEMIMSDAAVEQRRALIKRKKREKIEAPPPGGQGLTE) is hinge. The NR LBD domain maps to 143–430 (EQQALIQELM…LMQELFSSTD (288 aa)). Hyperforin contacts are provided by residues serine 244 and 282–285 (ILRF).

This sequence belongs to the nuclear hormone receptor family. NR1 subfamily. As to quaternary structure, heterodimer with RXRA. Interacts with NCOA1. Interacts (via domain NR LBD) with CRY1 and CRY2 in a ligand-dependent manner.

The protein resides in the nucleus. Nuclear receptor that binds and is activated by a variety of endogenous and xenobiotic compounds. Transcription factor that activates the transcription of multiple genes involved in the metabolism and secretion of potentially harmful xenobiotics, endogenous compounds and drugs. Response to specific ligands is species-specific, due to differences in the ligand-binding domain. Binds to a response element in the promoters of the CYP3A4 and ABCB1/MDR1 genes. Activated by naturally occurring steroids such as pregnenolone and progesterone, the cholesterol metabolite 5-beta-cholestane-3-alpha,7-alpha,12-alpha-triol, synthetic glucocorticoids and antiglucocorticoids and 16-alpha-carbonitrile (PCN). The chain is Nuclear receptor subfamily 1 group I member 2 (Nr1i2) from Mus musculus (Mouse).